The primary structure comprises 208 residues: Anti-sigma-W factor RsiW (208 aa).

The Cytoplasmic segment spans residues 1–87; sequence MSCPEQIVQL…ASVKRWFRTH (87 aa). Residues Cys3, His30, Cys34, and Cys37 each contribute to the Zn(2+) site. A helical membrane pass occupies residues 88 to 108; it reads PVIAAAAVFIILMGGGFFNSW. Topologically, residues 109-208 are extracellular; it reads HNDHNFSVSK…LDAFNPNGEE (100 aa).

Belongs to the zinc-associated anti-sigma factor (ZAS) superfamily. Anti-sigma-W factor family. In terms of assembly, forms a heterodimer with cognate sigma factor SigW, which probably prevents SigW from binding to DNA. Requires Zn(2+) as cofactor. Is processed by successive proteolytic events. First, the extracellular region of RsiW is cleaved by PrsW (site-1 cleavage) in response to cell envelope stresses. In a reconstituted E.coli system PrsW cuts between Ala-168 and Ser-169 followed by trimming by E.coli Tsp; the endogenous extracellular exopeptidase responsible for the event in B.subtilis has not been identified. Next, it undergoes cleavage at an intramembrane site (site-2 cleavage) mediated by RasP. This cleavage uncovers a cryptic proteolytic tag with conserved alanine residues in the transmembrane segment, that is recognized mainly by the ClpXP protease, which completely degrades the protein in the cytoplasm and leads to the induction of the sigma-W-controlled genes.

The protein localises to the cell membrane. The anti-sigma factor for extracytoplasmic function (ECF) sigma factor sigma-W (SigW). Holds SigW, its cognate ECF sigma factor, in an inactive form until released by regulated intramembrane proteolysis (RIP). SigW and RsiW mediate cell response to cell wall stress. RIP occurs when an extracytoplasmic signal triggers a concerted proteolytic cascade to transmit information and elicit cellular responses. The membrane-spanning regulatory substrate protein is first cut periplasmically (site-1 protease, S1P, PrsW), then within the membrane itself (site-2 protease, S2P, RasP), while cytoplasmic proteases finish degrading the anti-sigma factor, liberating sigma-W. The chain is Anti-sigma-W factor RsiW (rsiW) from Bacillus subtilis (strain 168).